The primary structure comprises 216 residues: LexA repressor (216 aa).

Positions 28-48 (RAEIAAELGFSSANSAEEHLR) form a DNA-binding region, H-T-H motif. Active-site for autocatalytic cleavage activity residues include S134 and K171.

The protein belongs to the peptidase S24 family. In terms of assembly, homodimer.

The enzyme catalyses Hydrolysis of Ala-|-Gly bond in repressor LexA.. Represses a number of genes involved in the response to DNA damage (SOS response), including recA and lexA. In the presence of single-stranded DNA, RecA interacts with LexA causing an autocatalytic cleavage which disrupts the DNA-binding part of LexA, leading to derepression of the SOS regulon and eventually DNA repair. The sequence is that of LexA repressor from Paraburkholderia xenovorans (strain LB400).